The sequence spans 944 residues: Protocadherin gamma-C5 (944 aa).

The signal sequence occupies residues 1–29; it reads MGPKTLPQLAGKWQVLCMLSLCCWGWVSG. Cadherin domains lie at 30–133, 134–242, 243–350, 351–454, 455–564, and 571–677; these read QLRY…SPSF, ATPE…APTF, QSSV…APEV, LLAS…APRF, NQQL…APAV, and WEHS…MPKS. At 30–693 the chain is on the extracellular side; that stretch reads QLRYSVVEES…PPERSDLTLY (664 aa). N-linked (GlcNAc...) asparagine glycans are attached at residues Asn-265, Asn-443, and Asn-547. The helical transmembrane segment at 694–714 threads the bilayer; the sequence is LIVALATVSLLSLVTFTFLSA. At 715–944 the chain is on the cytoplasmic side; sequence KCLQGNADGD…KKKSGKKEKK (230 aa). Disordered regions lie at residues 722–747, 812–853, and 914–944; these read DGDG…QSSP, SNTL…WPNN, and ATLT…KEKK. Residues 820–853 show a composition bias toward polar residues; that stretch reads QQAPPNTDWRFSQAQRPGTSGSQNGDDTGTWPNN. Positions 934–944 are enriched in basic residues; that stretch reads NKKKSGKKEKK.

The protein localises to the cell membrane. In terms of biological role, potential calcium-dependent cell-adhesion protein. May be involved in the establishment and maintenance of specific neuronal connections in the brain. The sequence is that of Protocadherin gamma-C5 (PCDHGC5) from Homo sapiens (Human).